A 339-amino-acid polypeptide reads, in one-letter code: Histidine protein methyltransferase 1 (339 aa).

Phosphoserine is present on residues Ser333 and Ser338.

It belongs to the methyltransferase superfamily. METTL18 family.

It localises to the cytoplasm. The protein localises to the nucleus. It carries out the reaction L-histidyl-[protein] + S-adenosyl-L-methionine = N(tele)-methyl-L-histidyl-[protein] + S-adenosyl-L-homocysteine + H(+). Functionally, protein-histidine N-methyltransferase that mediates methylation of target protein on His residues. This is Histidine protein methyltransferase 1 from Schizosaccharomyces pombe (strain 972 / ATCC 24843) (Fission yeast).